A 148-amino-acid polypeptide reads, in one-letter code: Large ribosomal subunit protein bL9 (148 aa).

As to quaternary structure, part of the 50S ribosomal subunit.

Binds to the 23S rRNA. Extends more that 50 Angstroms beyond the surface of the 70S ribosome. In Thermus thermophilus (strain ATCC 27634 / DSM 579 / HB8), this protein is Large ribosomal subunit protein bL9 (rplI).